The chain runs to 130 residues: Follitropin subunit beta (130 aa).

The signal sequence occupies residues 1-20 (MMKLIQLCILFWCWRAICCH). Cystine bridges form between cysteine 22/cysteine 70, cysteine 36/cysteine 85, cysteine 39/cysteine 123, cysteine 47/cysteine 101, cysteine 51/cysteine 103, and cysteine 106/cysteine 113. 2 N-linked (GlcNAc...) asparagine glycosylation sites follow: asparagine 26 and asparagine 43.

It belongs to the glycoprotein hormones subunit beta family. Heterodimer. The active follitropin is a heterodimer composed of an alpha chain/CGA shared with other hormones and a unique beta chain/FSHB shown here.

The protein resides in the secreted. Together with the alpha chain CGA constitutes follitropin, the follicle-stimulating hormone, and provides its biological specificity to the hormone heterodimer. Binds FSHR, a G protein-coupled receptor, on target cells to activate downstream signaling pathways. Follitropin is involved in follicle development and spermatogenesis in reproductive organs. This chain is Follitropin subunit beta (Fshb), found in Mus musculus (Mouse).